Here is a 550-residue protein sequence, read N- to C-terminus: Probable asparagine synthetase [glutamine-hydrolyzing] (550 aa).

The For GATase activity role is filled by Cys2. The region spanning Cys2–Ser189 is the Glutamine amidotransferase type-2 domain. Residues Arg53–Met57, Asn78–Glu80, and Asp100 each bind L-glutamine. One can recognise an Asparagine synthetase domain in the interval Tyr213–Tyr530. Residues Leu256, Val284, and Ser360–Gly361 each bind ATP.

The enzyme catalyses L-aspartate + L-glutamine + ATP + H2O = L-asparagine + L-glutamate + AMP + diphosphate + H(+). Its pathway is amino-acid biosynthesis; L-asparagine biosynthesis; L-asparagine from L-aspartate (L-Gln route): step 1/1. The chain is Probable asparagine synthetase [glutamine-hydrolyzing] from Acanthamoeba polyphaga mimivirus (APMV).